The chain runs to 68 residues: Protein SlyX homolog (68 aa).

Belongs to the SlyX family.

This chain is Protein SlyX homolog, found in Pseudomonas putida (strain ATCC 700007 / DSM 6899 / JCM 31910 / BCRC 17059 / LMG 24140 / F1).